The chain runs to 293 residues: uncharacterized protein (293 aa).

This is an uncharacterized protein from Acanthamoeba polyphaga (Amoeba).